The following is a 172-amino-acid chain: Large ribosomal subunit protein bL17 (172 aa).

Positions 153 to 172 are disordered; sequence AQAAEPVAAAEPATPATTAG.

The protein belongs to the bacterial ribosomal protein bL17 family. In terms of assembly, part of the 50S ribosomal subunit. Contacts protein L32.

This is Large ribosomal subunit protein bL17 from Sorangium cellulosum (strain So ce56) (Polyangium cellulosum (strain So ce56)).